The primary structure comprises 191 residues: Negative modulator of initiation of replication (191 aa).

Residues A96–V97 are interaction with DNA.

Belongs to the SeqA family. In terms of assembly, homodimer. Polymerizes to form helical filaments.

The protein resides in the cytoplasm. In terms of biological role, negative regulator of replication initiation, which contributes to regulation of DNA replication and ensures that replication initiation occurs exactly once per chromosome per cell cycle. Binds to pairs of hemimethylated GATC sequences in the oriC region, thus preventing assembly of replication proteins and re-initiation at newly replicated origins. Repression is relieved when the region becomes fully methylated. This Shewanella amazonensis (strain ATCC BAA-1098 / SB2B) protein is Negative modulator of initiation of replication.